The primary structure comprises 810 residues: MKEAQSMFEIPRGALYPVPPLRDIVVFPHMIVPLFVGREKSVRALEDVMKDDKQILLVTQKNAAQDDPTPADIYSVGTVGTVLQLLKLPDGTVKVLVEGGQRASITKFAENEDFFQAHADLVEEKVGESQELEALGRAVVSQFEQYIKLNKKIPPEVLVSINQIEEPGKLADTVASHLALKIPEKQQLLECATVSERLERVYAFMEGEIGVLQVEKRIRNRVKRQMEKTQREYYLNEQLKAIQKELGETEDGRDESAELEEKINKTRFSKEARDKALAELKKLRSMSPMSAEATVVRNYLDWMLSIPWKKRTKVKKDLKLAQKILDADHYGLEKVKERILEYLRVQNRMNKVKGPIQSLVGPPGVGKTSLGKSIAKSTGRNFVRMSLGGVRDEAEVRGHRRTYIGSMPGKVIQGMKKAKSSNPLFLLDEIDKLGADWRGDPSSALLEVLDPEQNGTFNDHYLEVDYDLSDVMFVCTANTMRMPQPLLDRMEIIRVAGYTEDEKVEISKRHLIEKQVEANGLKKGEFAISDDALRDLIRYYTREAGVRSLEREIANLCRKAVKEILMKGSAGAKVSVTRRNLDKYAGVRRFHFGEAELEDLVGVTTGLAWTEVGGELLSIEAVSLPGKGRVTTTGKLGDVMKESVQAAESYVKSRATAFGIKPTLFEKRDIHVHVPEGATPKDGPSAGVAMITSIVSVLTGIAVRKDVAMTGEITLRGRVLPIGGLKEKLLAALRGGLKHVLIPKDNEKDLAEIPDNVKRGLEIIPVSTVDDVLKHALVREVEPIEWKEPEAVEPAVAKPQTDGGGEVLRH.

In terms of domain architecture, Lon N-terminal spans Tyr16–Ile209. Position 361–368 (Gly361–Thr368) interacts with ATP. The Lon proteolytic domain maps to Glu598–Arg779. Active-site residues include Ser685 and Lys728.

The protein belongs to the peptidase S16 family. As to quaternary structure, homohexamer. Organized in a ring with a central cavity.

The protein localises to the cytoplasm. The enzyme catalyses Hydrolysis of proteins in presence of ATP.. Functionally, ATP-dependent serine protease that mediates the selective degradation of mutant and abnormal proteins as well as certain short-lived regulatory proteins. Required for cellular homeostasis and for survival from DNA damage and developmental changes induced by stress. Degrades polypeptides processively to yield small peptide fragments that are 5 to 10 amino acids long. Binds to DNA in a double-stranded, site-specific manner. Involved in iron uptake. This is Lon protease from Azospirillum brasilense.